A 298-amino-acid chain; its full sequence is Probable prolyl 4-hydroxylase 4 (298 aa).

The Cytoplasmic portion of the chain corresponds to 1–6; sequence MARRGL. A helical; Signal-anchor for type II membrane protein transmembrane segment spans residues 7-25; that stretch reads LISFFAIFSVLLQSSTSLI. The Lumenal portion of the chain corresponds to 26–298; that stretch reads SSSSVFVNPS…GYCRRSCKAC (273 aa). Asn-77 is a glycosylation site (N-linked (GlcNAc...) asparagine). The 126-residue stretch at 120–245 folds into the Fe2OG dioxygenase domain; that stretch reads NGEDIQVLRY…KWSATKWIHV (126 aa). 2 residues coordinate Fe cation: His-138 and Asp-140. A glycan (N-linked (GlcNAc...) asparagine) is linked at Asn-164. Residue His-226 coordinates Fe cation. Residue Lys-236 participates in 2-oxoglutarate binding. 2 N-linked (GlcNAc...) asparagine glycosylation sites follow: Asn-257 and Asn-262. The 41-residue stretch at 258–298 folds into the ShKT domain; it reads CTDMNESCERWAVLGECTKNPEYMVGTTELPGYCRRSCKAC. Cystine bridges form between Cys-258/Cys-298, Cys-265/Cys-291, and Cys-274/Cys-295.

The protein belongs to the P4HA family. Fe(2+) serves as cofactor. Requires L-ascorbate as cofactor.

The protein resides in the endoplasmic reticulum membrane. It carries out the reaction L-prolyl-[collagen] + 2-oxoglutarate + O2 = trans-4-hydroxy-L-prolyl-[collagen] + succinate + CO2. Functionally, catalyzes the post-translational formation of 4-hydroxyproline in -Xaa-Pro-Gly- sequences in proline-rich peptide sequences of plant glycoproteins and other proteins. Hydroxyprolines are important constituent of many plant cell wall glycoproteins such as extensins, hydroxyproline-rich glycoproteins, lectins and arabinogalactan proteins. The polypeptide is Probable prolyl 4-hydroxylase 4 (Arabidopsis thaliana (Mouse-ear cress)).